A 173-amino-acid polypeptide reads, in one-letter code: Cytochrome c-type biogenesis protein CcmE (173 aa).

Over 1–8 the chain is Cytoplasmic; the sequence is MNPRRKSR. Residues 9-29 traverse the membrane as a helical; Signal-anchor for type II membrane protein segment; it reads FKLVIFVVLGIAIASGLMLYA. At 30–173 the chain is on the periplasmic side; it reads LRQNIDLFYT…RDRQEKEGAK (144 aa). The heme site is built by histidine 131 and tyrosine 135. The segment at 152 to 173 is disordered; the sequence is GIKAADLKGESARDRQEKEGAK. The segment covering 156-173 has biased composition (basic and acidic residues); it reads ADLKGESARDRQEKEGAK.

Belongs to the CcmE/CycJ family.

The protein resides in the cell inner membrane. Functionally, heme chaperone required for the biogenesis of c-type cytochromes. Transiently binds heme delivered by CcmC and transfers the heme to apo-cytochromes in a process facilitated by CcmF and CcmH. The chain is Cytochrome c-type biogenesis protein CcmE from Haemophilus influenzae (strain PittEE).